The chain runs to 487 residues: Probable glutamate receptor (487 aa).

Positions 1 to 23 (MDKGLHFIFCVVTAVLLLRESSQ) are cleaved as a signal peptide. Over 24–169 (TGAMRNDDAM…FFHFLAPFSK (146 aa)) the chain is Extracellular. Asn104 carries an N-linked (GlcNAc...) asparagine glycan. Residues 170-190 (ETWTGLLFAYVLTCVCLFLVA) traverse the membrane as a helical segment. Residues 191 to 235 (RLSPCEWNEPKNEENHFTFLNSLWFGAGALTLQGVTPRPKAFSVR) lie on the Cytoplasmic side of the membrane. A helical membrane pass occupies residues 236-256 (VIAAIWWLFTIALLAAYIANF). Topologically, residues 257–419 (TALLSSGSEQ…EGWSPLQPQA (163 aa)) are extracellular. Residues 420-440 (LGGLFLTLAIGLALGVIAAMV) traverse the membrane as a helical segment. Over 441–487 (ELSNKSRHAAGHIKKSCCSIFTEEMCTRLRIKENTRQTQETSGRANA) the chain is Cytoplasmic.

This sequence belongs to the glutamate-gated ion channel (TC 1.A.10.1) family.

It localises to the cell membrane. Its subcellular location is the postsynaptic cell membrane. Its function is as follows. Receptor for glutamate. L-glutamate acts as an excitatory neurotransmitter at many synapses in the central nervous system. The postsynaptic actions of Glu are mediated by a variety of receptors that are named according to their selective agonists. This is Probable glutamate receptor (KBP) from Gallus gallus (Chicken).